The chain runs to 295 residues: (R)-3-hydroxydecanoyl-ACP:CoA transacylase (295 aa).

An AB hydrolase-1 domain is found at 28 to 254 (NTIILINGSL…VIRDAGHFLD (227 aa)).

Its pathway is polyester biosynthesis; polyhydroxyalkanoate biosynthesis. Catalyzes the transfer of the acyl moiety from in vitro synthesized 3-hydroxydecanoyl-CoA to acyl carrier protein. In Ectopseudomonas oleovorans (Pseudomonas oleovorans), this protein is (R)-3-hydroxydecanoyl-ACP:CoA transacylase (phaG).